Reading from the N-terminus, the 141-residue chain is MRQRTIVCPLIQNDGCYLLCKMADNRGVFPGQWALSGGGVEPGERIEEALRREIREELGEQLILSDITPWTFRDDIRIKTYADGRQEEIYMIYLIFDCVSANRDICINDEFQDYAWVKPEELALYDLNVATRHTLALKGLL.

Residues Met-1–Leu-141 enclose the Nudix hydrolase domain. The Nudix box signature appears at Gly-38 to Gly-59.

This sequence belongs to the Nudix hydrolase family. NudI subfamily. Monomer. Mg(2+) is required as a cofactor.

It carries out the reaction a ribonucleoside 5'-triphosphate + H2O = a ribonucleoside 5'-phosphate + diphosphate + H(+). The enzyme catalyses a 2'-deoxyribonucleoside 5'-triphosphate + H2O = a 2'-deoxyribonucleoside 5'-phosphate + diphosphate + H(+). It catalyses the reaction dUTP + H2O = dUMP + diphosphate + H(+). The catalysed reaction is dTTP + H2O = dTMP + diphosphate + H(+). It carries out the reaction dCTP + H2O = dCMP + diphosphate + H(+). Functionally, catalyzes the hydrolysis of nucleoside triphosphates, with a preference for pyrimidine deoxynucleoside triphosphates (dUTP, dTTP and dCTP). This chain is Nucleoside triphosphatase NudI, found in Salmonella paratyphi B (strain ATCC BAA-1250 / SPB7).